A 428-amino-acid polypeptide reads, in one-letter code: Histidine--tRNA ligase (428 aa).

Belongs to the class-II aminoacyl-tRNA synthetase family. As to quaternary structure, homodimer.

Its subcellular location is the cytoplasm. It catalyses the reaction tRNA(His) + L-histidine + ATP = L-histidyl-tRNA(His) + AMP + diphosphate + H(+). This Buchnera aphidicola subsp. Schizaphis graminum (strain Sg) protein is Histidine--tRNA ligase.